Here is a 202-residue protein sequence, read N- to C-terminus: dTTP/UTP pyrophosphatase (202 aa).

Asp-83 functions as the Proton acceptor in the catalytic mechanism.

This sequence belongs to the Maf family. YhdE subfamily. The cofactor is a divalent metal cation.

It localises to the cytoplasm. The catalysed reaction is dTTP + H2O = dTMP + diphosphate + H(+). It carries out the reaction UTP + H2O = UMP + diphosphate + H(+). Functionally, nucleoside triphosphate pyrophosphatase that hydrolyzes dTTP and UTP. May have a dual role in cell division arrest and in preventing the incorporation of modified nucleotides into cellular nucleic acids. This chain is dTTP/UTP pyrophosphatase, found in Polaromonas sp. (strain JS666 / ATCC BAA-500).